We begin with the raw amino-acid sequence, 1555 residues long: UDP-glucose:glycoprotein glucosyltransferase 1 (1555 aa).

The signal sequence occupies residues methionine 1 to alanine 42. N-linked (GlcNAc...) asparagine glycosylation is found at asparagine 536 and asparagine 1228. Positions lysine 1244 to leucine 1555 are glucosyltransferase. Serine 1277 is subject to Phosphoserine. Positions glycine 1534–leucine 1555 are disordered. A Prevents secretion from ER motif is present at residues arginine 1552–leucine 1555.

It belongs to the glycosyltransferase 8 family. In terms of assembly, monomer as well as in a tight complex with SELENOF. Interacts with METTL23. Part of a large chaperone multiprotein complex comprising DNAJB11, HSP90B1, HSPA5, HYOU, PDIA2, PDIA4, PDIA6, PPIB, SDF2L1, UGGT1 and very small amounts of ERP29, but not, or at very low levels, CALR nor CANX. Ca(2+) is required as a cofactor. The cofactor is Mn(2+). In terms of tissue distribution, higher levels in pancreas, skeletal muscle, kidney, and brain. Low levels in lung and heart.

Its subcellular location is the endoplasmic reticulum lumen. It localises to the endoplasmic reticulum-Golgi intermediate compartment. The catalysed reaction is N(4)-(alpha-D-Man-(1-&gt;2)-alpha-D-Man-(1-&gt;2)-alpha-D-Man-(1-&gt;3)-[alpha-D-Man-(1-&gt;2)-alpha-D-Man-(1-&gt;3)-[alpha-D-Man-(1-&gt;2)-alpha-D-Man-(1-&gt;6)]-alpha-D-Man-(1-&gt;6)]-beta-D-Man-(1-&gt;4)-beta-D-GlcNAc-(1-&gt;4)-beta-D-GlcNAc)-L-asparaginyl-[protein] (N-glucan mannose isomer 9A1,2,3B1,2,3) + UDP-alpha-D-glucose = N(4)-(alpha-D-Glc-(1-&gt;3)-alpha-D-Man-(1-&gt;2)-alpha-D-Man-(1-&gt;2)-alpha-D-Man-(1-&gt;3)-[alpha-D-Man-(1-&gt;2)-alpha-D-Man-(1-&gt;3)-[alpha-D-Man-(1-&gt;2)-alpha-D-Man-(1-&gt;6)]-alpha-D-Man-(1-&gt;6)]-beta-D-Man-(1-&gt;4)-beta-D-GlcNAc-(1-&gt;4)-beta-D-GlcNAc)-L-asparaginyl-[protein] + UDP + H(+). The protein operates within protein modification; protein glycosylation. Catalytic activity is enhanced by complex formation with SELENOF. Its function is as follows. Recognizes glycoproteins with minor folding defects. Reglucosylates single N-glycans near the misfolded part of the protein, thus providing quality control for protein folding in the endoplasmic reticulum. Reglucosylated proteins are recognized by calreticulin for recycling to the endoplasmic reticulum and refolding or degradation. In Homo sapiens (Human), this protein is UDP-glucose:glycoprotein glucosyltransferase 1 (UGGT1).